The following is a 411-amino-acid chain: Translation initiation factor 2 subunit gamma (411 aa).

The 193-residue stretch at 9–201 (QPSVNIGMVG…AIEKYIPSPK (193 aa)) folds into the tr-type G domain. The G1 stretch occupies residues 18-25 (GHVDHGKS). Positions 21, 25, 46, and 48 each coordinate Mg(2+). 21–26 (DHGKST) contacts GTP. The segment at 46 to 50 (GISIK) is G2. The interval 88–91 (DAPG) is G3. Residues 144–147 (NKID) and 179–181 (SAY) contribute to the GTP site. The segment at 144-147 (NKID) is G4. The G5 stretch occupies residues 179-181 (SAY).

This sequence belongs to the TRAFAC class translation factor GTPase superfamily. Classic translation factor GTPase family. EIF2G subfamily. In terms of assembly, heterotrimer composed of an alpha, a beta and a gamma chain. Mg(2+) serves as cofactor.

The catalysed reaction is GTP + H2O = GDP + phosphate + H(+). Functionally, eIF-2 functions in the early steps of protein synthesis by forming a ternary complex with GTP and initiator tRNA. This chain is Translation initiation factor 2 subunit gamma, found in Thermoplasma acidophilum (strain ATCC 25905 / DSM 1728 / JCM 9062 / NBRC 15155 / AMRC-C165).